The primary structure comprises 293 residues: Small ribosomal subunit biogenesis GTPase RsgA (293 aa).

In terms of domain architecture, CP-type G spans 63–223 (KNELVRPPIA…VADTPGFSSL (161 aa)). GTP contacts are provided by residues 112-115 (SKMD) and 166-174 (GQSGVGKSS). Residues Cys247, Cys252, His254, and Cys260 each contribute to the Zn(2+) site.

Belongs to the TRAFAC class YlqF/YawG GTPase family. RsgA subfamily. Monomer. Associates with 30S ribosomal subunit, binds 16S rRNA. It depends on Zn(2+) as a cofactor.

It is found in the cytoplasm. In terms of biological role, one of several proteins that assist in the late maturation steps of the functional core of the 30S ribosomal subunit. Helps release RbfA from mature subunits. May play a role in the assembly of ribosomal proteins into the subunit. Circularly permuted GTPase that catalyzes slow GTP hydrolysis, GTPase activity is stimulated by the 30S ribosomal subunit. In Bacillus cereus (strain ATCC 10987 / NRS 248), this protein is Small ribosomal subunit biogenesis GTPase RsgA.